Consider the following 144-residue polypeptide: MQFRASIAAAAGLFALANARIYGIAFPETVKAGDEVEAVITTENYIQAVQDIAIAFGIATEASAYPETLGNALGSFYLGPEESNTLENITETVTIPAGLAPGQYVVAAGLYSLYGASSSPTLSHYNVTVTVGNVTSETYVGSQR.

An N-terminal signal peptide occupies residues 1-19; it reads MQFRASIAAAAGLFALANA. Residues N88, N126, and N133 are each glycosylated (N-linked (GlcNAc...) asparagine). The BAK1/SERK3-binding stretch occupies residues 103–132; sequence QYVVAAGLYSLYGASSSPTLSHYNVTVTVG.

Belongs to the NIS1 effector family.

It localises to the secreted. Its subcellular location is the host cytoplasm. Functionally, secreted effector that induces necrotic lesions in Nicotiana benthamiana. Interacts with the host receptor-like kinases (RLKs) BAK1/SERK3 and BKK1/SERK4, inhibits their kinase activity and suppresses INF1-induced pathogen-associated molecular pattern (PAMP)-triggered immunity (PTI) in N.benthamiana. Also interacts with the host receptor-like cytoplasmic kinase (RLCK) BIK1 and inhibits its kinase activity, thereby inhibiting PAMP-induced ROS generation. In PTI, phosphorylation relaying by RLKs and RLCKs is critical for the initiation of downstream signaling. The chain is Necrosis-inducing secreted protein 1 from Colletotrichum higginsianum (strain IMI 349063) (Crucifer anthracnose fungus).